We begin with the raw amino-acid sequence, 174 residues long: Actin-related protein 2/3 complex subunit 3 (174 aa).

The protein belongs to the ARPC3 family. In terms of assembly, component of the Arp2/3 complex composed of arpB/Arp2, arpC/Arp3, arcA/p41-arc, arcB/p34-arc, arcC/p21-arc, arcD/p20-arc and arcE/p16-arc. Interacts with carmil (via the region between the LRR domain and COOH-terminal proline-rich domain); carmil is required for Arp2/3-dependent actin nucleation. Arp2/3 complex, MyoB, MyoC, and the alpha and beta subunits of capping protein all form a larger complex with carmil.

It localises to the cytoplasm. The protein resides in the cytoskeleton. It is found in the cytosol. The protein localises to the cell cortex. Its subcellular location is the cell projection. It localises to the pseudopodium. Functionally, functions as a component of the Arp2/3 complex which is involved in regulation of actin polymerization and together with an activating nucleation-promoting factor (NPF) mediates the formation of branched actin networks. Seems to contact the pointed end of the daughter actin filament. The Arp2/3 complex is involved in organizing the actin system in cell motility and chemotaxis, in phagocytosis and macropinocytosis, at late steps of endosome processing, and in mitosis. In concert with a group of other proteins, the Arp2/3 complex plays a general role in the rapid activation and adaptation of the actin system to its multiple functions. The polypeptide is Actin-related protein 2/3 complex subunit 3 (arcC) (Dictyostelium discoideum (Social amoeba)).